The sequence spans 213 residues: Dimethyl sulfoxide reductase transcriptional activator (213 aa).

Residues 155–206 (LTAKQREAALIAVHHGYYETPRRTELATLAEALGISKSALSQRLNAVEAKLA) form the HTH bat-type domain.

Functionally, involved in activating dmsEABCD gene expression related to dimethyl sulfoxide (DMSO) reductase. Required for anaerobic respiration on dimethyl sulfoxide (DMSO). This Haloferax volcanii (strain ATCC 29605 / DSM 3757 / JCM 8879 / NBRC 14742 / NCIMB 2012 / VKM B-1768 / DS2) (Halobacterium volcanii) protein is Dimethyl sulfoxide reductase transcriptional activator.